Here is a 277-residue protein sequence, read N- to C-terminus: MVESELSYEQIRLNRVEENKKRMGELNLNKLAQSLRVSSSSSSSSKPSPAKPRTMRIPVDFSEVRRSSRAKGPPPSYKEFGLEPLERRPRRSSRRRDLLNRVYASDDARMYAFDRAEKLQSSLDSEYASFTKPMLQSHVTGGFWLGLPLPFCKAHMPKRDVIMTLVDEEEEESQAKYLAQKNGLSGGWRGFAIDHQLVDGDAVVFHLIARTTFKVYIIRVNDDANNDSDGNEVNDDDSDGNEEDRDNDNESNEKQKETVSEGRQLRSSGKRKRRGRK.

The tract at residues 33–94 (QSLRVSSSSS…LERRPRRSSR (62 aa)) is disordered. Residues 130-221 (FTKPMLQSHV…TFKVYIIRVN (92 aa)) constitute a DNA-binding region (TF-B3). The span at 224–250 (ANNDSDGNEVNDDDSDGNEEDRDNDNE) shows a compositional bias: acidic residues. Residues 224–277 (ANNDSDGNEVNDDDSDGNEEDRDNDNESNEKQKETVSEGRQLRSSGKRKRRGRK) are disordered. Positions 251–264 (SNEKQKETVSEGRQ) are enriched in basic and acidic residues. Positions 268 to 277 (SGKRKRRGRK) are enriched in basic residues.

It is found in the nucleus. This is B3 domain-containing protein At3g19184 from Arabidopsis thaliana (Mouse-ear cress).